The primary structure comprises 314 residues: Bis(5'-nucleosyl)-tetraphosphatase, symmetrical (314 aa).

Residues 267–314 form a disordered region; it reads QVPGNPITHPPKTAQRPRQPRRRQRQRGGDQAQTGPAPTPASTGPAGG. Residues 297–314 show a composition bias toward low complexity; that stretch reads QAQTGPAPTPASTGPAGG.

This sequence belongs to the Ap4A hydrolase family.

The enzyme catalyses P(1),P(4)-bis(5'-adenosyl) tetraphosphate + H2O = 2 ADP + 2 H(+). Functionally, hydrolyzes diadenosine 5',5'''-P1,P4-tetraphosphate to yield ADP. This chain is Bis(5'-nucleosyl)-tetraphosphatase, symmetrical, found in Xanthomonas axonopodis pv. citri (strain 306).